We begin with the raw amino-acid sequence, 215 residues long: uncharacterized protein (215 aa).

Residues 1–17 (MKKVLASATILSLMLVG) form the signal peptide. Residues 17–110 (GCSNGGNDES…NKQQQSVQDN (94 aa)) are disordered. Cys18 carries N-palmitoyl cysteine lipidation. Cys18 carries S-diacylglycerol cysteine lipidation. A compositionally biased stretch (basic and acidic residues) spans 25-62 (ESSHKDDSSKTEQKDKSSSQHDSKKDSKRNDTNNKQDN). Low complexity-rich tracts occupy residues 63–76 (QENNTNKEQTNNQN) and 91–110 (NSNGNSSDNQNKQQQSVQDN).

Its subcellular location is the cell membrane. This is an uncharacterized protein from Staphylococcus epidermidis (strain ATCC 35984 / DSM 28319 / BCRC 17069 / CCUG 31568 / BM 3577 / RP62A).